Here is a 609-residue protein sequence, read N- to C-terminus: Phosphoenolpyruvate carboxykinase [GTP] (609 aa).

Substrate-binding positions include R81 and 220–222 (YGG). 2 residues coordinate Mn(2+): K229 and H249. S271 provides a ligand contact to substrate. 272-277 (ACGKTN) lines the GTP pocket. Residue C273 is part of the active site. D296 provides a ligand contact to Mn(2+). Substrate is bound at residue 387 to 389 (NSR). Residues R389, R420, and 515–518 (FGEN) each bind GTP.

The protein belongs to the phosphoenolpyruvate carboxykinase [GTP] family. In terms of assembly, monomer. Requires Mn(2+) as cofactor.

It localises to the cytoplasm. The enzyme catalyses oxaloacetate + GTP = phosphoenolpyruvate + GDP + CO2. It participates in carbohydrate biosynthesis; gluconeogenesis. Functionally, catalyzes the conversion of oxaloacetate (OAA) to phosphoenolpyruvate (PEP), the rate-limiting step in the metabolic pathway that produces glucose from lactate and other precursors derived from the citric acid cycle. The polypeptide is Phosphoenolpyruvate carboxykinase [GTP] (Mycolicibacterium paratuberculosis (strain ATCC BAA-968 / K-10) (Mycobacterium paratuberculosis)).